We begin with the raw amino-acid sequence, 210 residues long: Ribosomal RNA large subunit methyltransferase E (210 aa).

5 residues coordinate S-adenosyl-L-methionine: Gly60, Trp62, Asp85, Asp101, and Asp126. Lys166 functions as the Proton acceptor in the catalytic mechanism. Residues 191-200 (KPKASRDKSS) are compositionally biased toward basic and acidic residues. Positions 191–210 (KPKASRDKSSETFLVARDLK) are disordered.

Belongs to the class I-like SAM-binding methyltransferase superfamily. RNA methyltransferase RlmE family.

Its subcellular location is the cytoplasm. It carries out the reaction uridine(2552) in 23S rRNA + S-adenosyl-L-methionine = 2'-O-methyluridine(2552) in 23S rRNA + S-adenosyl-L-homocysteine + H(+). Functionally, specifically methylates the uridine in position 2552 of 23S rRNA at the 2'-O position of the ribose in the fully assembled 50S ribosomal subunit. The sequence is that of Ribosomal RNA large subunit methyltransferase E from Bordetella bronchiseptica (strain ATCC BAA-588 / NCTC 13252 / RB50) (Alcaligenes bronchisepticus).